Here is a 74-residue protein sequence, read N- to C-terminus: Antimicrobial peptide AcrAP2 (74 aa).

Positions 1–22 (MEIKYLLTVFLVLLIVSDHCQA) are cleaved as a signal peptide. Position 40 is a lysine amide (K40). Positions 46–74 (NLDGQIDRFRNFRKRDAELEELLSKLPIY) are excised as a propeptide.

Belongs to the non-disulfide-bridged peptide (NDBP) superfamily. Short antimicrobial peptide (group 4) family. As to expression, expressed by the venom gland.

It localises to the secreted. Its subcellular location is the target cell membrane. Has antimicrobial activity against the Gram-positive bacteria S.aureus (MIC=8 uM) and the yeast C.albicans (MIC=16 uM). Causes hemolysis on horse erythrocytes (64 uM for 100% hemolysis). Minimum bactericidal concentrations have also been tested against S.aureus and is four-fold higher (MBC=32 uM). The protein is Antimicrobial peptide AcrAP2 of Androctonus crassicauda (Arabian fat-tailed scorpion).